The chain runs to 93 residues: Phosphoribosyl-ATP pyrophosphatase (93 aa).

The protein belongs to the PRA-PH family.

It is found in the cytoplasm. It catalyses the reaction 1-(5-phospho-beta-D-ribosyl)-ATP + H2O = 1-(5-phospho-beta-D-ribosyl)-5'-AMP + diphosphate + H(+). Its pathway is amino-acid biosynthesis; L-histidine biosynthesis; L-histidine from 5-phospho-alpha-D-ribose 1-diphosphate: step 2/9. The polypeptide is Phosphoribosyl-ATP pyrophosphatase (Mycobacterium sp. (strain JLS)).